The sequence spans 379 residues: CCN family member 1 (379 aa).

Residues 1 to 24 (MSSSTIKTLAVAVTLLHLTRLALS) form the signal peptide. The IGFBP N-terminal domain occupies 25–94 (TCPAACHCPL…TALKGICRAQ (70 aa)). Disulfide bonds link cysteine 26–cysteine 50, cysteine 30–cysteine 52, cysteine 32–cysteine 53, cysteine 39–cysteine 56, cysteine 64–cysteine 78, and cysteine 70–cysteine 91. A VWFC domain is found at 98–164 (RPCEYNSRIY…GQCCEEWVCD (67 aa)). Serine 184 is modified (phosphoserine). In terms of domain architecture, TSP type-1 spans 226-271 (KCIVQTTSWSQCSKSCGTGISTRVTNDNSECRLVKETRICEVRPCG). A heparin-binding region spans residues 277-313 (SLKKGKKCSKTKKSPEPVRFTYAGCSSVKKYRPKYCG). 5 cysteine pairs are disulfide-bonded: cysteine 284-cysteine 321, cysteine 301-cysteine 335, cysteine 312-cysteine 351, cysteine 315-cysteine 353, and cysteine 320-cysteine 357. The region spanning 284 to 358 (CSKTKKSPEP…QSCKCNYNCP (75 aa)) is the CTCK domain.

This sequence belongs to the CCN family. As to quaternary structure, interaction with integrins is heparin- and cell-type-dependent and promotes cell adhesion.

The protein resides in the secreted. Its function is as follows. Promotes cell proliferation, chemotaxis, angiogenesis and cell adhesion. Appears to play a role in wound healing by up-regulating, in skin fibroblasts, the expression of a number of genes involved in angiogenesis, inflammation and matrix remodeling including VEGA-A, VEGA-C, MMP1, MMP3, TIMP1, uPA, PAI-1 and integrins alpha-3 and alpha-5. CCN1-mediated gene regulation is dependent on heparin-binding. Down-regulates the expression of alpha-1 and alpha-2 subunits of collagen type-1. Promotes cell adhesion and adhesive signaling through integrin alpha-6/beta-1, cell migration through integrin alpha-1/beta-5 and cell proliferation through integrin alpha-v/beta-3. The sequence is that of CCN family member 1 from Rattus norvegicus (Rat).